The primary structure comprises 358 residues: Uroporphyrinogen decarboxylase (358 aa).

Residues Arg-28–Arg-32, Asp-78, Tyr-154, Ser-208, and His-324 each bind substrate.

The protein belongs to the uroporphyrinogen decarboxylase family. As to quaternary structure, homodimer.

It is found in the cytoplasm. It carries out the reaction uroporphyrinogen III + 4 H(+) = coproporphyrinogen III + 4 CO2. It participates in porphyrin-containing compound metabolism; protoporphyrin-IX biosynthesis; coproporphyrinogen-III from 5-aminolevulinate: step 4/4. Catalyzes the decarboxylation of four acetate groups of uroporphyrinogen-III to yield coproporphyrinogen-III. This is Uroporphyrinogen decarboxylase from Acidiphilium cryptum (strain JF-5).